The sequence spans 525 residues: Glutathione hydrolase-like YwrD proenzyme (525 aa).

Thr-339 (nucleophile) is an active-site residue.

It belongs to the gamma-glutamyltransferase family. In terms of assembly, this enzyme consists of two polypeptide chains, which are synthesized from a single polypeptide. In terms of processing, cleaved by autocatalysis into a large and a small subunit.

It carries out the reaction an N-terminal (5-L-glutamyl)-[peptide] + an alpha-amino acid = 5-L-glutamyl amino acid + an N-terminal L-alpha-aminoacyl-[peptide]. The catalysed reaction is glutathione + H2O = L-cysteinylglycine + L-glutamate. The enzyme catalyses an S-substituted glutathione + H2O = an S-substituted L-cysteinylglycine + L-glutamate. Functionally, overexpressed protein with an N-terminal His tag has been reported not to hydrolyze glutathione; it is not clear if the construct is processed to 2 subunits. This Bacillus subtilis (strain 168) protein is Glutathione hydrolase-like YwrD proenzyme (ywrD).